A 111-amino-acid chain; its full sequence is MVGLSRLAGGGLLLLLLLALLPLALDGKPAPLPQALPEALAGGTTALRRDVTEEQQQQLVAEESSGPAAGRSDPKIGDGCFGLPLDHIGSVSGLGCNRPVQNRPKQIPGGS.

Residues methionine 1–glycine 27 form the signal peptide. The propeptide occupies lysine 28–arginine 71. Disordered stretches follow at residues valine 51–glycine 77 and serine 92–serine 111. Cysteine 80 and cysteine 96 are disulfide-bonded. The propeptide occupies isoleucine 107–serine 111.

This sequence belongs to the natriuretic peptide family. As to expression, expressed by the venom gland.

Its subcellular location is the secreted. Functionally, snake venom natriuretic peptide that exhibits vasoactive and probable hypotensive activity. Is only weakly active on natriuretic peptide receptor-C (NPR3). This chain is Natriuretic peptide TNP-b, found in Oxyuranus scutellatus scutellatus (Australian taipan).